Here is a 238-residue protein sequence, read N- to C-terminus: Ribonuclease PH (238 aa).

Phosphate is bound by residues Arg86 and 124–126 (GTR).

This sequence belongs to the RNase PH family. As to quaternary structure, homohexameric ring arranged as a trimer of dimers.

It catalyses the reaction tRNA(n+1) + phosphate = tRNA(n) + a ribonucleoside 5'-diphosphate. In terms of biological role, phosphorolytic 3'-5' exoribonuclease that plays an important role in tRNA 3'-end maturation. Removes nucleotide residues following the 3'-CCA terminus of tRNAs; can also add nucleotides to the ends of RNA molecules by using nucleoside diphosphates as substrates, but this may not be physiologically important. Probably plays a role in initiation of 16S rRNA degradation (leading to ribosome degradation) during starvation. The polypeptide is Ribonuclease PH (Caulobacter vibrioides (strain ATCC 19089 / CIP 103742 / CB 15) (Caulobacter crescentus)).